A 186-amino-acid polypeptide reads, in one-letter code: ATP synthase subunit delta (186 aa).

This sequence belongs to the ATPase delta chain family. As to quaternary structure, F-type ATPases have 2 components, F(1) - the catalytic core - and F(0) - the membrane proton channel. F(1) has five subunits: alpha(3), beta(3), gamma(1), delta(1), epsilon(1). CF(0) has four main subunits: a(1), b(1), b'(1) and c(10-14). The alpha and beta chains form an alternating ring which encloses part of the gamma chain. F(1) is attached to F(0) by a central stalk formed by the gamma and epsilon chains, while a peripheral stalk is formed by the delta, b and b' chains.

It localises to the cell inner membrane. Its function is as follows. F(1)F(0) ATP synthase produces ATP from ADP in the presence of a proton or sodium gradient. F-type ATPases consist of two structural domains, F(1) containing the extramembraneous catalytic core and F(0) containing the membrane proton channel, linked together by a central stalk and a peripheral stalk. During catalysis, ATP synthesis in the catalytic domain of F(1) is coupled via a rotary mechanism of the central stalk subunits to proton translocation. In terms of biological role, this protein is part of the stalk that links CF(0) to CF(1). It either transmits conformational changes from CF(0) to CF(1) or is implicated in proton conduction. The sequence is that of ATP synthase subunit delta from Cereibacter sphaeroides (strain ATCC 17029 / ATH 2.4.9) (Rhodobacter sphaeroides).